The sequence spans 65 residues: Muscarinic toxin-like protein 2 (65 aa).

4 disulfide bridges follow: Cys-3–Cys-24, Cys-17–Cys-42, Cys-46–Cys-57, and Cys-58–Cys-63.

Belongs to the three-finger toxin family. Short-chain subfamily. Type C muscarinic toxin sub-subfamily. Monomer. In terms of tissue distribution, expressed by the venom gland.

It localises to the secreted. The polypeptide is Muscarinic toxin-like protein 2 (Naja kaouthia (Monocled cobra)).